A 250-amino-acid polypeptide reads, in one-letter code: MSALLSPDQLEADLRAIGARLYHDQHPFHALLHHGKLDRGQVQAWALNRFEYQRCIPLKDAAILARMEDPALRRIWRQRIVDHDGNSTTDGGIARWLHLTDALGLDRTLVESGRALLPGTRFAVQAYLQFVSEKSLLEAIASSLTELFAPNIIGQRVAGMLKHYDFVSSDALAYFEHRLTEAPRDSDFALDYVKQHADTVEKQALVKAALHFKCSVLWAQLDALHVAYVTPGIVWPDAFVPDRDASRVAA.

The protein belongs to the PqqC family.

The catalysed reaction is 6-(2-amino-2-carboxyethyl)-7,8-dioxo-1,2,3,4,7,8-hexahydroquinoline-2,4-dicarboxylate + 3 O2 = pyrroloquinoline quinone + 2 H2O2 + 2 H2O + H(+). It participates in cofactor biosynthesis; pyrroloquinoline quinone biosynthesis. Functionally, ring cyclization and eight-electron oxidation of 3a-(2-amino-2-carboxyethyl)-4,5-dioxo-4,5,6,7,8,9-hexahydroquinoline-7,9-dicarboxylic-acid to PQQ. This chain is Pyrroloquinoline-quinone synthase, found in Xanthomonas oryzae pv. oryzae (strain PXO99A).